A 349-amino-acid polypeptide reads, in one-letter code: Ribosomal RNA small subunit methyltransferase H (349 aa).

S-adenosyl-L-methionine is bound by residues 34–36 (GGH), Asp-54, Phe-81, Asp-102, and Gln-109.

It belongs to the methyltransferase superfamily. RsmH family.

Its subcellular location is the cytoplasm. It catalyses the reaction cytidine(1402) in 16S rRNA + S-adenosyl-L-methionine = N(4)-methylcytidine(1402) in 16S rRNA + S-adenosyl-L-homocysteine + H(+). In terms of biological role, specifically methylates the N4 position of cytidine in position 1402 (C1402) of 16S rRNA. The protein is Ribosomal RNA small subunit methyltransferase H of Dehalococcoides mccartyi (strain ATCC BAA-2266 / KCTC 15142 / 195) (Dehalococcoides ethenogenes (strain 195)).